The sequence spans 459 residues: Argininosuccinate lyase (459 aa).

The protein belongs to the lyase 1 family. Argininosuccinate lyase subfamily.

The protein localises to the cytoplasm. The enzyme catalyses 2-(N(omega)-L-arginino)succinate = fumarate + L-arginine. Its pathway is amino-acid biosynthesis; L-arginine biosynthesis; L-arginine from L-ornithine and carbamoyl phosphate: step 3/3. The polypeptide is Argininosuccinate lyase (Photorhabdus laumondii subsp. laumondii (strain DSM 15139 / CIP 105565 / TT01) (Photorhabdus luminescens subsp. laumondii)).